The sequence spans 119 residues: Ribonuclease (119 aa).

Residues Lys6 and Arg9 each contribute to the substrate site. His11 functions as the Proton acceptor in the catalytic mechanism. 3 disulfide bridges follow: Cys26–Cys81, Cys40–Cys92, and Cys58–Cys107. Substrate contacts are provided by residues 41–45 (KFTNT) and Arg82. Catalysis depends on His114, which acts as the Proton donor.

This sequence belongs to the pancreatic ribonuclease family. Monomer. Interacts with and forms tight 1:1 complexes with RNH1. Dimerization of two such complexes may occur. Interaction with RNH1 inhibits this protein.

It localises to the secreted. The catalysed reaction is an [RNA] containing cytidine + H2O = an [RNA]-3'-cytidine-3'-phosphate + a 5'-hydroxy-ribonucleotide-3'-[RNA].. It carries out the reaction an [RNA] containing uridine + H2O = an [RNA]-3'-uridine-3'-phosphate + a 5'-hydroxy-ribonucleotide-3'-[RNA].. Functionally, endonuclease that catalyzes the cleavage of RNA on the 3' side of pyrimidine nucleotides. Acts on single-stranded and double-stranded RNA. This is Ribonuclease from Chelonia mydas (Green sea-turtle).